Consider the following 75-residue polypeptide: UPF0352 protein YPTB1297 (75 aa).

The protein belongs to the UPF0352 family.

The protein is UPF0352 protein YPTB1297 of Yersinia pseudotuberculosis serotype I (strain IP32953).